Reading from the N-terminus, the 156-residue chain is Ribosome maturation factor RimP (156 aa).

This sequence belongs to the RimP family.

The protein localises to the cytoplasm. Its function is as follows. Required for maturation of 30S ribosomal subunits. The protein is Ribosome maturation factor RimP of Bacillus subtilis (strain 168).